A 184-amino-acid polypeptide reads, in one-letter code: Photosystem I assembly protein Ycf4 (184 aa).

A run of 2 helical transmembrane segments spans residues 22-42 (FCWAFILFVGSVGFLLVGISS) and 57-77 (IVFFPQGIVMSFYGIAGLFIS).

Belongs to the Ycf4 family.

The protein localises to the plastid. It is found in the chloroplast thylakoid membrane. Its function is as follows. Seems to be required for the assembly of the photosystem I complex. The protein is Photosystem I assembly protein Ycf4 of Coffea arabica (Arabian coffee).